A 384-amino-acid chain; its full sequence is tRNA-specific 2-thiouridylase MnmA (384 aa).

Residues 21-28 and M47 contribute to the ATP site; that span reads GMSGGVDS. Residues 107–109 are interaction with target base in tRNA; that stretch reads NPD. C112 serves as the catalytic Nucleophile. C112 and C208 are oxidised to a cystine. Position 136 (G136) interacts with ATP. The tract at residues 158 to 160 is interaction with tRNA; sequence KDQ. The active-site Cysteine persulfide intermediate is C208. An interaction with tRNA region spans residues 320–321; sequence RY.

This sequence belongs to the MnmA/TRMU family.

The protein localises to the cytoplasm. The enzyme catalyses S-sulfanyl-L-cysteinyl-[protein] + uridine(34) in tRNA + AH2 + ATP = 2-thiouridine(34) in tRNA + L-cysteinyl-[protein] + A + AMP + diphosphate + H(+). In terms of biological role, catalyzes the 2-thiolation of uridine at the wobble position (U34) of tRNA, leading to the formation of s(2)U34. This chain is tRNA-specific 2-thiouridylase MnmA, found in Chromohalobacter salexigens (strain ATCC BAA-138 / DSM 3043 / CIP 106854 / NCIMB 13768 / 1H11).